Here is a 212-residue protein sequence, read N- to C-terminus: ATP-dependent Clp protease proteolytic subunit 2 (212 aa).

The disordered stretch occupies residues 1–20; that stretch reads MSHNTSIASQGMPAMAGPET. The active-site Nucleophile is S107. H132 is an active-site residue.

This sequence belongs to the peptidase S14 family. As to quaternary structure, fourteen ClpP subunits assemble into 2 heptameric rings which stack back to back to give a disk-like structure with a central cavity, resembling the structure of eukaryotic proteasomes.

It is found in the cytoplasm. The catalysed reaction is Hydrolysis of proteins to small peptides in the presence of ATP and magnesium. alpha-casein is the usual test substrate. In the absence of ATP, only oligopeptides shorter than five residues are hydrolyzed (such as succinyl-Leu-Tyr-|-NHMec, and Leu-Tyr-Leu-|-Tyr-Trp, in which cleavage of the -Tyr-|-Leu- and -Tyr-|-Trp bonds also occurs).. Cleaves peptides in various proteins in a process that requires ATP hydrolysis. Has a chymotrypsin-like activity. Plays a major role in the degradation of misfolded proteins. This is ATP-dependent Clp protease proteolytic subunit 2 from Cutibacterium acnes (strain DSM 16379 / KPA171202) (Propionibacterium acnes).